A 460-amino-acid polypeptide reads, in one-letter code: DNA repair protein RAD57 (460 aa).

ATP is bound at residue 125-132; the sequence is GESSTGKS.

This sequence belongs to the RecA family.

Its subcellular location is the nucleus. Participates in the repair of X-ray-induced damage to DNA and in meiosis. It may act in part by stabilizing a repair complex of other RAD genes. This chain is DNA repair protein RAD57 (RAD57), found in Saccharomyces cerevisiae (strain ATCC 204508 / S288c) (Baker's yeast).